Consider the following 216-residue polypeptide: Thymidylate kinase (216 aa).

10 to 17 (GVDGSGKT) provides a ligand contact to ATP.

The protein belongs to the thymidylate kinase family.

The catalysed reaction is dTMP + ATP = dTDP + ADP. Functionally, phosphorylation of dTMP to form dTDP in both de novo and salvage pathways of dTTP synthesis. The sequence is that of Thymidylate kinase from Pelotomaculum thermopropionicum (strain DSM 13744 / JCM 10971 / SI).